The sequence spans 222 residues: UPF0128 protein PYRAB08320 (222 aa).

This sequence belongs to the UPF0128 family.

This Pyrococcus abyssi (strain GE5 / Orsay) protein is UPF0128 protein PYRAB08320.